Here is a 110-residue protein sequence, read N- to C-terminus: Large ribosomal subunit protein uL22 (110 aa).

The protein belongs to the universal ribosomal protein uL22 family. As to quaternary structure, part of the 50S ribosomal subunit.

This protein binds specifically to 23S rRNA; its binding is stimulated by other ribosomal proteins, e.g. L4, L17, and L20. It is important during the early stages of 50S assembly. It makes multiple contacts with different domains of the 23S rRNA in the assembled 50S subunit and ribosome. Its function is as follows. The globular domain of the protein is located near the polypeptide exit tunnel on the outside of the subunit, while an extended beta-hairpin is found that lines the wall of the exit tunnel in the center of the 70S ribosome. The sequence is that of Large ribosomal subunit protein uL22 from Mannheimia succiniciproducens (strain KCTC 0769BP / MBEL55E).